Reading from the N-terminus, the 193-residue chain is MEDSLLEIMTKDGGDMPAPLEVSTVPAVGDVISGEYNGGMKELMEHLKAQLQALFEDVRAMRGALDEQASHIQVLSDDVCANQRAIVSMCQIMTTAPRQGGLGVAGGKGSFPSVPHEPETPSPGIGDSGLLGRDPDEEDEEEEEEKETASPATPTSHCERSESPGLLGENGPLVEPLDLPDITLLQLEGEASL.

A coiled-coil region spans residues 39-68 (GMKELMEHLKAQLQALFEDVRAMRGALDEQ). A disordered region spans residues 101–176 (GLGVAGGKGS…LGENGPLVEP (76 aa)). Residues 135–146 (PDEEDEEEEEEK) are compositionally biased toward acidic residues.

The protein is Coiled-coil domain-containing protein 184 (Ccdc184) of Rattus norvegicus (Rat).